The chain runs to 348 residues: Fe(3+) ions import ATP-binding protein FbpC (348 aa).

The 231-residue stretch at 6–236 (LSLEGATVRF…PADAFVARFL (231 aa)) folds into the ABC transporter domain. 38–45 (GPSGSGKS) provides a ligand contact to ATP.

This sequence belongs to the ABC transporter superfamily. Fe(3+) ion importer (TC 3.A.1.10) family. As to quaternary structure, the complex is composed of two ATP-binding proteins (FbpC), two transmembrane proteins (FbpB) and a solute-binding protein (FbpA).

It is found in the cell membrane. The catalysed reaction is Fe(3+)(out) + ATP + H2O = Fe(3+)(in) + ADP + phosphate + H(+). In terms of biological role, part of the ABC transporter complex FbpABC involved in Fe(3+) ions import. Responsible for energy coupling to the transport system. In Streptomyces coelicolor (strain ATCC BAA-471 / A3(2) / M145), this protein is Fe(3+) ions import ATP-binding protein FbpC.